We begin with the raw amino-acid sequence, 317 residues long: Phospho-N-acetylmuramoyl-pentapeptide-transferase (317 aa).

A run of 9 helical transmembrane segments spans residues L4–P24, T49–V69, A76–L96, M112–I132, L147–N167, F186–L206, I223–I243, L246–F266, and R297–L317.

The protein belongs to the glycosyltransferase 4 family. MraY subfamily. Requires Mg(2+) as cofactor.

The protein localises to the cell membrane. The catalysed reaction is UDP-N-acetyl-alpha-D-muramoyl-L-alanyl-gamma-D-glutamyl-meso-2,6-diaminopimeloyl-D-alanyl-D-alanine + di-trans,octa-cis-undecaprenyl phosphate = di-trans,octa-cis-undecaprenyl diphospho-N-acetyl-alpha-D-muramoyl-L-alanyl-D-glutamyl-meso-2,6-diaminopimeloyl-D-alanyl-D-alanine + UMP. It participates in cell wall biogenesis; peptidoglycan biosynthesis. Functionally, catalyzes the initial step of the lipid cycle reactions in the biosynthesis of the cell wall peptidoglycan: transfers peptidoglycan precursor phospho-MurNAc-pentapeptide from UDP-MurNAc-pentapeptide onto the lipid carrier undecaprenyl phosphate, yielding undecaprenyl-pyrophosphoryl-MurNAc-pentapeptide, known as lipid I. In Clostridium kluyveri (strain NBRC 12016), this protein is Phospho-N-acetylmuramoyl-pentapeptide-transferase.